The chain runs to 186 residues: ATP synthase subunit delta (186 aa).

Belongs to the ATPase delta chain family. In terms of assembly, F-type ATPases have 2 components, F(1) - the catalytic core - and F(0) - the membrane proton channel. F(1) has five subunits: alpha(3), beta(3), gamma(1), delta(1), epsilon(1). F(0) has three main subunits: a(1), b(2) and c(10-14). The alpha and beta chains form an alternating ring which encloses part of the gamma chain. F(1) is attached to F(0) by a central stalk formed by the gamma and epsilon chains, while a peripheral stalk is formed by the delta and b chains.

The protein resides in the cell inner membrane. In terms of biological role, f(1)F(0) ATP synthase produces ATP from ADP in the presence of a proton or sodium gradient. F-type ATPases consist of two structural domains, F(1) containing the extramembraneous catalytic core and F(0) containing the membrane proton channel, linked together by a central stalk and a peripheral stalk. During catalysis, ATP synthesis in the catalytic domain of F(1) is coupled via a rotary mechanism of the central stalk subunits to proton translocation. Functionally, this protein is part of the stalk that links CF(0) to CF(1). It either transmits conformational changes from CF(0) to CF(1) or is implicated in proton conduction. The sequence is that of ATP synthase subunit delta from Brucella anthropi (strain ATCC 49188 / DSM 6882 / CCUG 24695 / JCM 21032 / LMG 3331 / NBRC 15819 / NCTC 12168 / Alc 37) (Ochrobactrum anthropi).